Consider the following 216-residue polypeptide: MTAPNQDPRRLWDISPPLSPATPVWPGDTPFQQQPAWQMDEHCPVNVGRITLSPHTGAHADAPLHYAADGAPIGAVPLTPYLGTCRVIHCIGASPVVEPRHIEHALAGLPPRVLLRTYRQAPLAQWDPHFCAVAAETIALLAAHGVQLVGIDTPSLDPQESKTMDAHNAVRRHGLAILEGIVLDEVDAGDYELIALPLRFAGLDASPVRAVLRSLD.

Residue W25 participates in substrate binding. H55, H59, and D61 together coordinate Zn(2+). Residue H65 is the Proton donor/acceptor of the active site. Zn(2+) contacts are provided by H167 and E179.

Belongs to the Cyclase 1 superfamily. KynB family. In terms of assembly, homodimer. It depends on Zn(2+) as a cofactor.

The catalysed reaction is N-formyl-L-kynurenine + H2O = L-kynurenine + formate + H(+). It functions in the pathway amino-acid degradation; L-tryptophan degradation via kynurenine pathway; L-kynurenine from L-tryptophan: step 2/2. Catalyzes the hydrolysis of N-formyl-L-kynurenine to L-kynurenine, the second step in the kynurenine pathway of tryptophan degradation. In Cupriavidus necator (strain ATCC 17699 / DSM 428 / KCTC 22496 / NCIMB 10442 / H16 / Stanier 337) (Ralstonia eutropha), this protein is Kynurenine formamidase.